The primary structure comprises 212 residues: Thymidylate kinase (212 aa).

10-17 (GLEGAGKT) is a binding site for ATP.

It belongs to the thymidylate kinase family.

It carries out the reaction dTMP + ATP = dTDP + ADP. Its function is as follows. Phosphorylation of dTMP to form dTDP in both de novo and salvage pathways of dTTP synthesis. In Cronobacter sakazakii (strain ATCC BAA-894) (Enterobacter sakazakii), this protein is Thymidylate kinase.